Reading from the N-terminus, the 885-residue chain is Dual serine/threonine and tyrosine protein kinase (885 aa).

One can recognise a Protein kinase domain in the interval 614-868 (PKLGRELGRG…PLLGIVQPGL (255 aa)). ATP is bound by residues 620 to 628 (LGRGQYGVV) and lysine 643. Aspartate 739 (proton acceptor) is an active-site residue.

Belongs to the protein kinase superfamily. Ser/Thr protein kinase family.

It localises to the cytoplasm. The protein resides in the cell membrane. Its subcellular location is the apical cell membrane. The protein localises to the basolateral cell membrane. It is found in the cell junction. The enzyme catalyses L-seryl-[protein] + ATP = O-phospho-L-seryl-[protein] + ADP + H(+). It carries out the reaction L-threonyl-[protein] + ATP = O-phospho-L-threonyl-[protein] + ADP + H(+). It catalyses the reaction L-tyrosyl-[protein] + ATP = O-phospho-L-tyrosyl-[protein] + ADP + H(+). Its function is as follows. May act as a positive regulator of ERK phosphorylation downstream of fibroblast growth factor-receptor activation. May induce both caspase-dependent apoptosis and caspase-independent cell death. Plays a role in the embryonic development. The polypeptide is Dual serine/threonine and tyrosine protein kinase (dstyk) (Danio rerio (Zebrafish)).